The following is a 1161-amino-acid chain: Nuclear pore complex-interacting protein family member B11 (1161 aa).

The chain crosses the membrane as a helical span at residues 63 to 87 (IIIAFPTSYKVVITLWIVYLWVSLL). 2 disordered regions span residues 278-580 (ADDN…DDNI) and 892-1161 (SADD…RRLS). A compositionally biased stretch (pro residues) spans 311-321 (PLPPSAPPSAP). Composition is skewed to basic and acidic residues over residues 368-378 (DNIKTTAERLR), 410-420 (DNIKTPAEHLR), 452-462 (DNIKTPAERLR), 494-504 (DNIKTPAEHLR), 536-546 (DNIKTTAEHLR), 918-928 (DNIKTPAERLR), 960-970 (DNIKTPAERLR), 1002-1012 (DNIKTPAERLR), and 1044-1054 (DNIKTPAERLR).

This sequence belongs to the NPIP family.

It localises to the membrane. In Homo sapiens (Human), this protein is Nuclear pore complex-interacting protein family member B11 (NPIPB11).